The primary structure comprises 474 residues: Synaptotagmin-17 (474 aa).

The tract at residues 54 to 112 (PAQTPPWLVSNRSEDKEGDSDNTTSEPPATPQDTSPDRRRSSSDTSRSTYSLTRRISSL) is disordered. A compositionally biased stretch (low complexity) spans 96–112 (SDTSRSTYSLTRRISSL). C2 domains are found at residues 184 to 310 (QLGM…HWWK) and 321 to 455 (ELGE…EQWH).

It belongs to the synaptotagmin family.

It localises to the membrane. Its function is as follows. May play a role in dendrite formation by melanocytes. The protein is Synaptotagmin-17 (syt17) of Xenopus tropicalis (Western clawed frog).